The following is a 983-amino-acid chain: Importin beta-like protein kap113 (983 aa).

An Importin N-terminal domain is found at Ala-24–Lys-96.

The protein belongs to the importin beta family.

It is found in the nucleus. Functions as a component of the nuclear pore complex (NPC). NPC components, collectively referred to as nucleoporins (NUPs), can play the role of both NPC structural components and of docking or interaction partners for transiently associated nuclear transport factors. Active directional transport is assured by both, a Phe-Gly (FG) repeat affinity gradient for these transport factors across the NPC and a transport cofactor concentration gradient across the nuclear envelope. Involved in the export of mRNA from the nucleus to the cytoplasm. May play a role in mitotic spindle formation and/or function. This chain is Importin beta-like protein kap113 (kap113), found in Schizosaccharomyces pombe (strain 972 / ATCC 24843) (Fission yeast).